Reading from the N-terminus, the 477-residue chain is Argininosuccinate lyase (477 aa).

Belongs to the lyase 1 family. Argininosuccinate lyase subfamily.

The protein resides in the cytoplasm. The catalysed reaction is 2-(N(omega)-L-arginino)succinate = fumarate + L-arginine. It participates in amino-acid biosynthesis; L-arginine biosynthesis; L-arginine from L-ornithine and carbamoyl phosphate: step 3/3. In Streptomyces avermitilis (strain ATCC 31267 / DSM 46492 / JCM 5070 / NBRC 14893 / NCIMB 12804 / NRRL 8165 / MA-4680), this protein is Argininosuccinate lyase.